A 132-amino-acid chain; its full sequence is Small ribosomal subunit protein uS8 (132 aa).

Belongs to the universal ribosomal protein uS8 family. In terms of assembly, part of the 30S ribosomal subunit. Contacts proteins S5 and S12.

In terms of biological role, one of the primary rRNA binding proteins, it binds directly to 16S rRNA central domain where it helps coordinate assembly of the platform of the 30S subunit. This Rhodopseudomonas palustris (strain HaA2) protein is Small ribosomal subunit protein uS8.